We begin with the raw amino-acid sequence, 191 residues long: UPF0312 protein Sputw3181_1309 (191 aa).

A signal peptide spans 1-22 (MKKQLLSALIGVSLLVPMAASA).

It belongs to the UPF0312 family. Type 1 subfamily.

It is found in the periplasm. This is UPF0312 protein Sputw3181_1309 from Shewanella sp. (strain W3-18-1).